The following is a 1318-amino-acid chain: MDKYDKNVPSDYDGLFQKAADANGVSYDLLRKVAWTESRFVPTAKSKTGPLGMMQFTKATAKALGLRVTDGPDDDRLNPELAINAAAKQLAGLVGKFDGDELKAALAYNQGEGRLGNPQLEAYSKGDFASISEEGRNYMRNLLDVAKSPMAGQLETFGGITPKGKGIPAEVGLAGIGHKQKVTQELPESTSFDVKGIEQEATAKPFAKDFWETHGETLDEYNSRSTFFGFKNAAEAELSNSVAGMAFRAGRLDNGFDVFKDTITPTRWNSHIWTPEELEKIRTEVKNPAYINVVTGGSPENLDDLIKLANENFENDSRAAEAGLGAKLSAGIIGAGVDPLSYVPMVGVTGKGFKLINKALVVGAESAALNVASEGLRTSVAGGDADYAGAALGGFVFGAGMSAISDAVAAGLKRSKPEAEFDNEFIGPMMRLEARETARNANSADLSRMNTENMKFEGEHNGVPYEDLPTERGAVVLHDGSVLSASNPINPKTLKEFSEVDPEKAARGIKLAGFTEIGLKTLGSDDADIRRVAIDLVRSPTGMQSGASGKFGATASDIHERLHGTDQRTYNDLYKAMSDAMKDPEFSTGGAKMSREETRYTIYRRAALAIERPELQKALTPSERIVMDIIKRHFDTKRELMENPAIFGNTKAVSIFPESRHKGTYVPHVYDRHAKALMIQRYGAEGLQEGIARSWMNSYVSRPEVKARVDEMLKELHGVKEVTPEMVEKYAMDKAYGISHSDQFTNSSIIEENIEGLVGIENNSFLEARNLFDSDLSITMPDGQQFSVNDLRDFDMFRIMPAYDRRVNGDIAIMGSTGKTTKELKDEILALKAKAEGDGKKTGEVHALMDTVKILTGRARRNQDTVWETSLRAINDLGFFAKNAYMGAQNITEIAGMIVTGNVRALGHGIPILRDTLYKSKPVSAKELKELHASLFGKEVDQLIRPKRADIVQRLREATDTGPAVANIVGTLKYSTQELAARSPWTKLLNGTTNYLLDAARQGMLGDVISATLTGKTTRWEKEGFLRGASVTPEQMAGIKSLIKEHMVRGEDGKFTVKDKQAFSMDPRAMDLWRLADKVADEAMLRPHKVSLQDSHAFGALGKMVMQFKSFTIKSLNSKFLRTFYDGYKNNRAIDAALSIITSMGLAGGFYAMAAHVKAYALPKEKRKEYLERALDPTMIAHAALSRSSQLGAPLAMVDLVGGVLGFESSKMARSTILPKDTVKERDPNKPYTSREVMGAMGSNLLEQMPSAGFVANVGATLMNAAGVVNSPNKATEQDFMTGLMNSTKELVPNDPLTQQLVLKIYEANGVNLRERRK.

The Periplasmic segment spans residues 1-1136 (MDKYDKNVPS…GYKNNRAIDA (1136 aa)). Residues 24-111 (GVSYDLLRKV…LKAALAYNQG (88 aa)) are transglycosylase SLT-type domain. Glutamate 37 is an active-site residue. Residues 1137–1157 (ALSIITSMGLAGGFYAMAAHV) form a helical membrane-spanning segment. Topologically, residues 1158 to 1318 (KAYALPKEKR…NGVNLRERRK (161 aa)) are cytoplasmic. The interval 1314–1318 (RERRK) is essential for viral DNA translocation.

The protein belongs to the transglycosylase Slt family. In terms of assembly, homotetramer. Interacts with gp15; after ejection the gp15-gp16 complex composed of a gp15 octamer and a gp16 tetramer probably binds both the viral DNA and the host inner membrane.

It is found in the virion. It localises to the host cell inner membrane. The catalysed reaction is Exolytic cleavage of the (1-&gt;4)-beta-glycosidic linkage between N-acetylmuramic acid (MurNAc) and N-acetylglucosamine (GlcNAc) residues in peptidoglycan, from either the reducing or the non-reducing ends of the peptidoglycan chains, with concomitant formation of a 1,6-anhydrobond in the MurNAc residue.. In terms of biological role, component of the cylindrical core that assembles on the inner surface of the capsid during capsid formation and plays a role in viral DNA ejection into the host cell. The inner core is composed of stacked rings of gp14, gp15 and gp16 proteins. Following binding to the host cell surface, the internal core is diassembled and gp16 is ejected along with gp14 and gp15 into the infected cell. Gp16 probably inserts in the host inner membrane and remains associated with gp15. The gp15-gp16 complex binds to both the viral DNA and the host inner membrane, probably escorting the leading end of the genome through the periplasm and controlling the extend of DNA translocated into the host cell. Functions as an exolysin that catalyzes the cleavage of the glycosidic bonds between N-acetylmuramic acid and N-acetylglucosamine residues in peptidoglycans allowing the local digestion of the bacterial peptidoglycan wall. The protein is Peptidoglycan transglycosylase gp16 of Escherichia coli (Bacteriophage T7).